The primary structure comprises 713 residues: Cyclomaltodextrin glucanotransferase (713 aa).

Positions 1–27 (MKRFMKLTAVWTLWLSLTLGLLSPVHA) are cleaved as a signal peptide. Residues 28–165 (APDTSVSNKQ…NIKVIIDFAP (138 aa)) are A1. Ca(2+) contacts are provided by D54, N56, N59, and N60. Residues C70 and C77 are joined by a disulfide bond. Residues G78 and D80 each coordinate Ca(2+). A substrate-binding site is contributed by 127–128 (YW). A Ca(2+)-binding site is contributed by N166. Residues 166–229 (NHTSPASSDD…NLYDLADLNH (64 aa)) are b. H167 serves as a coordination point for substrate. I217 contacts Ca(2+). 220–223 (NLYD) lines the substrate pocket. D226 contributes to the Ca(2+) binding site. An A2 region spans residues 230-433 (NNSSVDVYLK…LRKSNPAIAY (204 aa)). R254 is a binding site for substrate. The active-site Nucleophile is D256. Residue 259-260 (KH) participates in substrate binding. Residue H260 coordinates Ca(2+). The active-site Proton donor is E284. The substrate site is built by H354, D398, and R402. The segment at 434-522 (GSTHERWINN…GTAVWQYTTD (89 aa)) is c. Residues 523-609 (ATTPIIGNVG…SNIYDNFEVL (87 aa)) form a d region. Positions 526–607 (PIIGNVGPMM…AASNIYDNFE (82 aa)) constitute an IPT/TIG domain. In terms of domain architecture, CBM20 spans 608–713 (VLTGDQVTVR…TATVNVNWQP (106 aa)). Residues 610–713 (TGDQVTVRFV…TATVNVNWQP (104 aa)) are e.

The protein belongs to the glycosyl hydrolase 13 family. As to quaternary structure, monomer. Ca(2+) serves as cofactor.

It localises to the secreted. It catalyses the reaction Cyclizes part of a (1-&gt;4)-alpha-D-glucan chain by formation of a (1-&gt;4)-alpha-D-glucosidic bond.. The sequence is that of Cyclomaltodextrin glucanotransferase (cgt) from Bacillus sp. (strain 1011).